A 380-amino-acid chain; its full sequence is SAM and SH3 domain-containing protein 3 (380 aa).

Disordered stretches follow at residues Met-1–Trp-76 and Leu-96–Pro-168. The span at Leu-22 to Val-41 shows a compositional bias: low complexity. Ser-27, Ser-34, and Ser-42 each carry phosphoserine. The residue at position 61 (Thr-61) is a Phosphothreonine. At Ser-97 the chain carries Phosphoserine. At Thr-103 the chain carries Phosphothreonine. Ser-110 bears the Phosphoserine mark. Thr-112 carries the phosphothreonine modification. Residues Ser-113 and Ser-120 each carry the phosphoserine modification. The segment covering Leu-141 to Glu-150 has biased composition (polar residues). Residues Pro-173–Glu-234 enclose the SH3 domain. In terms of domain architecture, SAM spans Pro-252–Tyr-316. At Thr-318 the chain carries Phosphothreonine. The span at Thr-318 to Ala-327 shows a compositional bias: acidic residues. Residues Thr-318–Pro-380 are disordered. Ser-320 carries the phosphoserine modification. Positions Glu-369 to Pro-380 are enriched in polar residues.

In terms of tissue distribution, preferentially expressed in lymphoid tissues. Expressed in bone marrow, thymus, spleen, lymph nodes and Peyer patches of gut. In the spleen and lymph nodes, expressed in both T- and B-cells. In the thymus, in the medulla and cortex.

In terms of biological role, may function as a signaling adapter protein in lymphocytes. In Mus musculus (Mouse), this protein is SAM and SH3 domain-containing protein 3 (Sash3).